Here is a 564-residue protein sequence, read N- to C-terminus: Ferric reductase transmembrane component 1 (564 aa).

Residue Asn-4 is glycosylated (N-linked (GlcNAc...) asparagine). Transmembrane regions (helical) follow at residues 10 to 30 and 73 to 93; these read TVIAICLILGILLAFILMFWL and VILTLIAVPVVFAISIPFIGM. N-linked (GlcNAc...) asparagine glycosylation occurs at Asn-111. Residues 117–137 form a helical membrane-spanning segment; sequence VAARLGFLACGLYVTSYFFSI. Positions 121–254 constitute a Ferric oxidoreductase domain; it reads LGFLACGLYV…VYMKVCVAVY (134 aa). Residues His-157 and His-171 each contribute to the heme site. Transmembrane regions (helical) follow at residues 160-180 and 193-213; these read LSQYAIMIGAIHGFAYIGLAA and IIGYVILGLMVIMIVSSLPFF. Positions 225 and 239 each coordinate heme. One can recognise an FAD-binding FR-type domain in the interval 255-410; sequence VFDRGCRMLR…DGPYGPVSNP (156 aa). Asn-268 carries an N-linked (GlcNAc...) asparagine glycan. 317 to 323 provides a ligand contact to FAD; it reads HPFTIAS. A glycan (N-linked (GlcNAc...) asparagine) is linked at Asn-360. Ser-362, Ser-381, and Ser-383 each carry phosphoserine. A helical transmembrane segment spans residues 417-437; the sequence is LFLFAGGVGVSYILPIILDTI. Position 419–427 (419–427) interacts with NAD(+); the sequence is LFAGGVGVS. Asn-501 carries N-linked (GlcNAc...) asparagine glycosylation.

This sequence belongs to the ferric reductase (FRE) family. FAD is required as a cofactor. It depends on heme as a cofactor.

The protein localises to the cell membrane. The catalysed reaction is 2 a Fe(II)-siderophore + NADP(+) + H(+) = 2 a Fe(III)-siderophore + NADPH. Metalloreductase responsible for reducing extracellular iron and copper prior to import. Catalyzes the reductive uptake of Fe(3+)-salts and Fe(3+) bound to catecholate or hydroxamate siderophores. Fe(3+) is reduced to Fe(2+), which then dissociates from the siderophore and can be imported by the high-affinity Fe(2+) transport complex in the plasma membrane. Also participates in Cu(2+) reduction and Cu(+) uptake. The chain is Ferric reductase transmembrane component 1 (frp1) from Schizosaccharomyces pombe (strain 972 / ATCC 24843) (Fission yeast).